Here is a 282-residue protein sequence, read N- to C-terminus: Putative polysaccharide deacetylase YheN (282 aa).

A helical membrane pass occupies residues 15-35 (LAFKFASLAVLCVLLLLMVIL). The NodB homology domain maps to 85-271 (KTVYLTFDDG…KLKEKGYSFG (187 aa)).

The protein belongs to the polysaccharide deacetylase family.

It localises to the cell membrane. This Bacillus subtilis (strain 168) protein is Putative polysaccharide deacetylase YheN (yheN).